The primary structure comprises 147 residues: MGGCMHSTWDHALHSRGEPRPSEAPASISAPSKMPKSVSISKQLASIKALKKGSDLEKAIATIALVFRNASDPDGKLGKATAKKLLQTQFKKFTEREETKPKYQDILSELDEHTENKLDFEDFVILLLSLAIMSDLLRNMWNENTMK.

The segment at Met1 to Lys36 is disordered. A compositionally biased stretch (basic and acidic residues) spans Thr8 to Pro21. Residues Glu23–Ser32 are compositionally biased toward low complexity.

It belongs to the S-100 family. Expressed exclusively in ciliated epithelial cells. Detected in ciliated epithelium of trachea and oviduct (at protein level).

The protein localises to the cell projection. Its subcellular location is the cilium. In terms of biological role, may be a component of the linker structure that bridges the ciliary membrane and peripheral singlet microtubules. The chain is Sentan (Sntn) from Mus musculus (Mouse).